Reading from the N-terminus, the 311-residue chain is Long form salivary protein D7L1 (311 aa).

Positions 1–16 (MKALIFLGAIIAGVLS) are cleaved as a signal peptide. 2 disulfide bridges follow: Cys34–Cys67 and Cys63–Cys120. The ADP site is built by Ser146, Arg149, Tyr153, and Lys160. Cystine bridges form between Cys170–Cys202, Cys183–Cys311, and Cys244–Cys258. Positions 281, 282, and 283 each coordinate ADP.

It belongs to the PBP/GOBP family. Distal lateral and medial lobes of female mosquito salivary gland (at protein level). Expressed in the head and thorax of the female mosquitoes, where the salivary glands are located. Expressed in salivary gland. Not detected in the female mosquito abdomen. Not detected in the male mosquito tissues.

Its subcellular location is the secreted. Modulates blood feeding of female mosquitoes on vertebrate species by binding and sequestering different mediators involved in the host response. Binds adenine, adenosine, AMP, ADP and ATP, with the highest affinity to ATP and ADP. Inhibits agonist-induced platelet aggregation and hemostasis. The polypeptide is Long form salivary protein D7L1 (Culex quinquefasciatus (Southern house mosquito)).